The primary structure comprises 519 residues: Protein nucleotidyltransferase YdiU (519 aa).

ATP contacts are provided by Gly-101, Gly-103, Arg-104, Lys-123, Asp-135, Gly-136, Arg-193, and Arg-200. Asp-271 (proton acceptor) is an active-site residue. 2 residues coordinate Mg(2+): Asn-272 and Asp-281. Asp-281 provides a ligand contact to ATP.

The protein belongs to the SELO family. The cofactor is Mg(2+). Requires Mn(2+) as cofactor.

It carries out the reaction L-seryl-[protein] + ATP = 3-O-(5'-adenylyl)-L-seryl-[protein] + diphosphate. It catalyses the reaction L-threonyl-[protein] + ATP = 3-O-(5'-adenylyl)-L-threonyl-[protein] + diphosphate. The enzyme catalyses L-tyrosyl-[protein] + ATP = O-(5'-adenylyl)-L-tyrosyl-[protein] + diphosphate. The catalysed reaction is L-histidyl-[protein] + UTP = N(tele)-(5'-uridylyl)-L-histidyl-[protein] + diphosphate. It carries out the reaction L-seryl-[protein] + UTP = O-(5'-uridylyl)-L-seryl-[protein] + diphosphate. It catalyses the reaction L-tyrosyl-[protein] + UTP = O-(5'-uridylyl)-L-tyrosyl-[protein] + diphosphate. In terms of biological role, nucleotidyltransferase involved in the post-translational modification of proteins. It can catalyze the addition of adenosine monophosphate (AMP) or uridine monophosphate (UMP) to a protein, resulting in modifications known as AMPylation and UMPylation. This Tolumonas auensis (strain DSM 9187 / NBRC 110442 / TA 4) protein is Protein nucleotidyltransferase YdiU.